The sequence spans 318 residues: Sucrose operon repressor (318 aa).

The 56-residue stretch at 1 to 56 (MIKLEDVANKAGVSVTTVSRVINRKGYLSDATISKVEKAMQDLHYIPNAAARSLQG) folds into the HTH lacI-type domain. A DNA-binding region (H-T-H motif) is located at residues 4 to 23 (LEDVANKAGVSVTTVSRVIN).

Its function is as follows. This protein may control the expression of the genes that are involved in the transport and catabolism of sucrose. In Lactococcus lactis subsp. lactis (Streptococcus lactis), this protein is Sucrose operon repressor (sacR).